We begin with the raw amino-acid sequence, 1010 residues long: 2-oxoglutarate dehydrogenase-like, mitochondrial (1010 aa).

A mitochondrion-targeting transit peptide spans 1–73 (MSQLRLLPSR…RSVHKSWDSF (73 aa)). Positions 130, 143, and 145 each coordinate Ca(2+). Thiamine diphosphate is bound by residues R299, D398, N431, I433, and Q663. The Mg(2+) site is built by D398, N431, and I433.

Belongs to the alpha-ketoglutarate dehydrogenase family. In terms of assembly, the OGDHC complex comprises multiple copies of three catalytic enzyme components, the 2-oxoglutarate dehydrogenase (OGDH/E1), the dihydrolipoamide dehydrogenase (DLST/E2) and the dihydrolipoamide dehydrogenase (DLD/E3). OGDHL/E1-like isoenzyme may replace OGDH in the OGDHC complex in the brain. The presence of either ODGH/E1 or ODGHL/E1-like isoenzyme in the complex may depend on its tissular distribution. The cofactor is thiamine diphosphate. Requires Mg(2+) as cofactor.

It is found in the mitochondrion matrix. It catalyses the reaction N(6)-[(R)-lipoyl]-L-lysyl-[protein] + 2-oxoglutarate + H(+) = N(6)-[(R)-S(8)-succinyldihydrolipoyl]-L-lysyl-[protein] + CO2. In terms of biological role, 2-oxoglutarate dehydrogenase (E1-like) component of the 2-oxoglutarate dehydrogenase multienzyme complex (OGDHC) which mediates the decarboxylation of alpha-ketoglutarate in the tricarboxylic acid cycle. The OGDHC complex catalyzes the overall conversion of 2-oxoglutarate to succinyl-CoA and CO(2) while reducing NAD(+) to NADH. The OGDHC complex is mainly active in the mitochondrion. Involved in the inhibition of cell proliferation and in apoptosis. This is 2-oxoglutarate dehydrogenase-like, mitochondrial (OGDHL) from Pongo abelii (Sumatran orangutan).